The primary structure comprises 293 residues: MATISAKLVKELRKKTGAGMMDCKKALTETDGDIDKAIDYLREKGIAKAAKKADRIAAEGLVHVETKGNDAVIVEINSETDFVARNEGFQELVKEIANQVLDTKAETVEALMETTLPNGKSVDERIKEAISTIGEKLSVRRFAIRTKTDNDAFGAYLHMGGRIGVLTVVEGSTDEEAARDVAMHIAAINPKYVSSEQVSEEEINHEREVLKQQALNEGKPENIVEKMVEGRLRKYLQEICAVDQDFVKNPDVTVEAFLKTKGGKLVDFVRYEVGEGMEKREENFADEVKGQMK.

Residues 80-83 form an involved in Mg(2+) ion dislocation from EF-Tu region; sequence TDFV.

The protein belongs to the EF-Ts family.

Its subcellular location is the cytoplasm. Associates with the EF-Tu.GDP complex and induces the exchange of GDP to GTP. It remains bound to the aminoacyl-tRNA.EF-Tu.GTP complex up to the GTP hydrolysis stage on the ribosome. The chain is Elongation factor Ts from Staphylococcus aureus (strain Mu3 / ATCC 700698).